The following is a 98-amino-acid chain: Cuticle protein 67, isoform A (98 aa).

Repeat copies occupy residues 7–10 (AAPA), 15–18 (AAPA), 22–25 (AAPA), 79–82 (AAPA), 86–89 (AAPA), and 92–95 (AAPA).

Its function is as follows. Component of the cuticle of migratory locust which contains more than 100 different structural proteins. This Locusta migratoria (Migratory locust) protein is Cuticle protein 67, isoform A.